A 49-amino-acid polypeptide reads, in one-letter code: Large ribosomal subunit protein bL33A (49 aa).

This sequence belongs to the bacterial ribosomal protein bL33 family.

The protein is Large ribosomal subunit protein bL33A of Staphylococcus aureus (strain COL).